Consider the following 403-residue polypeptide: Na(+)-translocating NADH-quinone reductase subunit B (403 aa).

Helical transmembrane passes span 56 to 76 (MMIT…WNTG), 121 to 141 (AYFL…EVLF), 163 to 183 (ILPP…GVVI), 220 to 240 (WTAV…AGGI), 258 to 278 (IHGS…AVLI), 287 to 307 (IVTG…LIGS), 312 to 332 (LFGM…GMIF), 348 to 368 (WVFG…NPAF), and 371 to 391 (GMML…HFVI). FMN phosphoryl threonine is present on Thr-230.

It belongs to the NqrB/RnfD family. In terms of assembly, composed of six subunits; NqrA, NqrB, NqrC, NqrD, NqrE and NqrF. FMN serves as cofactor.

It localises to the cell inner membrane. It catalyses the reaction a ubiquinone + n Na(+)(in) + NADH + H(+) = a ubiquinol + n Na(+)(out) + NAD(+). In terms of biological role, NQR complex catalyzes the reduction of ubiquinone-1 to ubiquinol by two successive reactions, coupled with the transport of Na(+) ions from the cytoplasm to the periplasm. NqrA to NqrE are probably involved in the second step, the conversion of ubisemiquinone to ubiquinol. The protein is Na(+)-translocating NADH-quinone reductase subunit B of Stutzerimonas stutzeri (strain A1501) (Pseudomonas stutzeri).